Consider the following 601-residue polypeptide: DNA ligase (601 aa).

D258 provides a ligand contact to ATP. The N6-AMP-lysine intermediate role is filled by K260. ATP-binding residues include R265, R280, E310, F350, R427, and K433. The disordered stretch occupies residues 568-601 (DKSPEDATTTDEILEMYNKQPKKKIESPPIDESV).

The protein belongs to the ATP-dependent DNA ligase family. The cofactor is Mg(2+).

The enzyme catalyses ATP + (deoxyribonucleotide)n-3'-hydroxyl + 5'-phospho-(deoxyribonucleotide)m = (deoxyribonucleotide)n+m + AMP + diphosphate.. Functionally, DNA ligase that seals nicks in double-stranded DNA during DNA replication, DNA recombination and DNA repair. This Saccharolobus islandicus (strain L.S.2.15 / Lassen #1) (Sulfolobus islandicus) protein is DNA ligase.